The sequence spans 437 residues: ATP-dependent protease ATPase subunit HslU (437 aa).

Residues Val18, Gly60–Glu65, Asp250, Glu315, and Arg387 contribute to the ATP site.

The protein belongs to the ClpX chaperone family. HslU subfamily. As to quaternary structure, a double ring-shaped homohexamer of HslV is capped on each side by a ring-shaped HslU homohexamer. The assembly of the HslU/HslV complex is dependent on binding of ATP.

The protein resides in the cytoplasm. Its function is as follows. ATPase subunit of a proteasome-like degradation complex; this subunit has chaperone activity. The binding of ATP and its subsequent hydrolysis by HslU are essential for unfolding of protein substrates subsequently hydrolyzed by HslV. HslU recognizes the N-terminal part of its protein substrates and unfolds these before they are guided to HslV for hydrolysis. The protein is ATP-dependent protease ATPase subunit HslU of Methylorubrum extorquens (strain PA1) (Methylobacterium extorquens).